Consider the following 271-residue polypeptide: Effector CFEM6 (271 aa).

The signal sequence occupies residues Met1–Ala17. A CFEM domain is found at Gln18–Ser111. 4 disulfide bridges follow: Cys25-Cys68, Cys29-Cys63, Cys42-Cys49, and Cys51-Cys84. Asp46 serves as a coordination point for heme. Ser247 carries the GPI-anchor amidated serine lipid modification. A propeptide spans Ser248 to Leu271 (removed in mature form).

Belongs to the RBT5 family.

The protein resides in the cell membrane. It localises to the secreted. It is found in the host nucleus. Its subcellular location is the host cell membrane. The protein localises to the host chloroplast envelope. Appears to function during host infection, and may play a role in suppressing the host immune response. The chain is Effector CFEM6 from Marssonina brunnea f. sp. multigermtubi (strain MB_m1) (Marssonina leaf spot fungus).